Reading from the N-terminus, the 1125-residue chain is Transcription-repair-coupling factor (1125 aa).

In terms of domain architecture, Helicase ATP-binding spans 597–758 (DMMSFKVMDR…LIKLRDISVL (162 aa)). 610–617 (GDVGFGKT) serves as a coordination point for ATP. Positions 711–714 (DEEQ) match the DEEQ box motif. In terms of domain architecture, Helicase C-terminal spans 774–933 (SFSELLIKHA…GFKIAMKDME (160 aa)).

The protein in the N-terminal section; belongs to the UvrB family. In the C-terminal section; belongs to the helicase family. RecG subfamily.

The protein resides in the cytoplasm. Its function is as follows. Couples transcription and DNA repair by recognizing RNA polymerase (RNAP) stalled at DNA lesions. Mediates ATP-dependent release of RNAP and its truncated transcript from the DNA, and recruitment of nucleotide excision repair machinery to the damaged site. The protein is Transcription-repair-coupling factor of Borreliella burgdorferi (strain ATCC 35210 / DSM 4680 / CIP 102532 / B31) (Borrelia burgdorferi).